A 281-amino-acid chain; its full sequence is Phosphatidylglycerol--prolipoprotein diacylglyceryl transferase (281 aa).

3 helical membrane passes run 11–31 (IIFT…VISF), 57–77 (LLYS…IIFY), and 89–109 (VFYI…AIIV). Arg-140 contributes to the a 1,2-diacyl-sn-glycero-3-phospho-(1'-sn-glycerol) binding site. Transmembrane regions (helical) follow at residues 194 to 214 (PTQL…IYFF), 222 to 242 (GSIS…IEFF), and 255 to 275 (IITM…IIMY).

Belongs to the Lgt family.

The protein localises to the cell inner membrane. The catalysed reaction is L-cysteinyl-[prolipoprotein] + a 1,2-diacyl-sn-glycero-3-phospho-(1'-sn-glycerol) = an S-1,2-diacyl-sn-glyceryl-L-cysteinyl-[prolipoprotein] + sn-glycerol 1-phosphate + H(+). It participates in protein modification; lipoprotein biosynthesis (diacylglyceryl transfer). Catalyzes the transfer of the diacylglyceryl group from phosphatidylglycerol to the sulfhydryl group of the N-terminal cysteine of a prolipoprotein, the first step in the formation of mature lipoproteins. This Buchnera aphidicola subsp. Acyrthosiphon pisum (strain APS) (Acyrthosiphon pisum symbiotic bacterium) protein is Phosphatidylglycerol--prolipoprotein diacylglyceryl transferase.